A 165-amino-acid chain; its full sequence is UPF0179 protein Igni_1272 (165 aa).

Belongs to the UPF0179 family.

The protein is UPF0179 protein Igni_1272 of Ignicoccus hospitalis (strain KIN4/I / DSM 18386 / JCM 14125).